A 471-amino-acid polypeptide reads, in one-letter code: Plant intracellular Ras-group-related LRR protein 2 (471 aa).

A coiled-coil region spans residues 106-133 (VVRLDEVHDSYEKKLKDTEEELSRVYST). LRR repeat units follow at residues 159–182 (GGTVERIDLSSQELKLIPEAFWKV), 183–205 (VGLVYLNLSGNDLTFIPDAISKL), 206–229 (KKLEELDVSSNSLESLPDSIGMLL), 231–251 (LRILNVNANNLTALPESIAHC), 253–275 (SLVELDASYNNLTSLPTNIGYGL), 276–298 (QNLERLSIQLNKLRYFPGSISEM), 300–321 (NLKYLDAHMNEIHGIPNSIGRL), 324–346 (LEVLNLSSNFNNLMGVPDTITDL), 347–369 (TNLRELDLSNNQIQAIPDSFYRL), and 371–392 (KLEKLNLDQNPLEIPSQEVATQ). Residues 393 to 405 (GAEVVREFMRKRW) carry the GVYW; degenerate motif.

The protein belongs to the SHOC2 family. Widely expressed but preferentially in roots.

Its function is as follows. Leucine-rich repeat protein that likely mediates protein interactions, possibly in the context of signal transduction. The polypeptide is Plant intracellular Ras-group-related LRR protein 2 (PIRL2) (Arabidopsis thaliana (Mouse-ear cress)).